Reading from the N-terminus, the 255-residue chain is Type III pantothenate kinase (255 aa).

6 to 13 (DVGNTHIV) provides a ligand contact to ATP. Residues tyrosine 100 and 107 to 110 (GADR) contribute to the substrate site. Aspartate 109 acts as the Proton acceptor in catalysis. A K(+)-binding site is contributed by aspartate 129. Threonine 132 contributes to the ATP binding site. Threonine 184 contributes to the substrate binding site.

It belongs to the type III pantothenate kinase family. As to quaternary structure, homodimer. It depends on NH4(+) as a cofactor. K(+) is required as a cofactor.

The protein resides in the cytoplasm. The enzyme catalyses (R)-pantothenate + ATP = (R)-4'-phosphopantothenate + ADP + H(+). It participates in cofactor biosynthesis; coenzyme A biosynthesis; CoA from (R)-pantothenate: step 1/5. Functionally, catalyzes the phosphorylation of pantothenate (Pan), the first step in CoA biosynthesis. The polypeptide is Type III pantothenate kinase (Ruminiclostridium cellulolyticum (strain ATCC 35319 / DSM 5812 / JCM 6584 / H10) (Clostridium cellulolyticum)).